The sequence spans 244 residues: MTNPFDSAGSKAPPKPFTVSEGRREVRSFVLRQGRFTPAQQRAFDERWPRFGLDYTGQPRDLDATFGRPAHKVLEIGFGNGAALRFAAQHDPSRDYIGIEVHAPGVGRLLNALADDNADHVRLYHHDAVEVLQNEIADGALDEVRIYFPDPWHKKRHNKRRLLQPAFAELLVRKLRPGGRLHCATDWEDYAEQMWDVLDATAGLVNRAGPRGSVPRPDWRPQTHFETRGQKLGHGVWDLLYDRT.

Residues 1–20 (MTNPFDSAGSKAPPKPFTVS) are disordered. 4 residues coordinate S-adenosyl-L-methionine: Glu75, Glu100, Asp127, and Asp150. The active site involves Asp150. Lys154 contacts substrate. Positions 156–161 (RHNKRR) are interaction with RNA. Residues Asp186 and 223–226 (THFE) each bind substrate.

This sequence belongs to the class I-like SAM-binding methyltransferase superfamily. TrmB family.

The enzyme catalyses guanosine(46) in tRNA + S-adenosyl-L-methionine = N(7)-methylguanosine(46) in tRNA + S-adenosyl-L-homocysteine. The protein operates within tRNA modification; N(7)-methylguanine-tRNA biosynthesis. In terms of biological role, catalyzes the formation of N(7)-methylguanine at position 46 (m7G46) in tRNA. The chain is tRNA (guanine-N(7)-)-methyltransferase from Stenotrophomonas maltophilia (strain K279a).